The sequence spans 105 residues: MQSPAMKRIKSSSHSRWDGSGSVNEMPFPSTIRLQGSFWECSTRRHMCYILRYLFRANGHRHFSYERLDCRNQTLRLPDHLYQPSRPHLLPHLSQLLLVRDSGYL.

Positions 1-27 are disordered; that stretch reads MQSPAMKRIKSSSHSRWDGSGSVNEMP.

It is found in the mitochondrion. This is an uncharacterized protein from Arabidopsis thaliana (Mouse-ear cress).